The chain runs to 224 residues: Small ribosomal subunit protein uS5 (224 aa).

A disordered region spans residues 1–38 (MAEQSAGGQGAPEGRDSRDSREGRGRRDGGRGGRDSDK). Residues 13-38 (EGRDSRDSREGRGRRDGGRGGRDSDK) are compositionally biased toward basic and acidic residues. In terms of domain architecture, S5 DRBM spans 41-104 (YLERVVAINR…EEARKGFFRV (64 aa)).

Belongs to the universal ribosomal protein uS5 family. As to quaternary structure, part of the 30S ribosomal subunit. Contacts proteins S4 and S8.

In terms of biological role, with S4 and S12 plays an important role in translational accuracy. Located at the back of the 30S subunit body where it stabilizes the conformation of the head with respect to the body. In Mycobacterium ulcerans (strain Agy99), this protein is Small ribosomal subunit protein uS5.